A 38-amino-acid polypeptide reads, in one-letter code: MMMFITVYDINQKQKKRYGLRGCNLNLKATVLPLHKRI.

Belongs to the asfivirus C84L family.

This is an uncharacterized protein from Ornithodoros (relapsing fever ticks).